The sequence spans 65 residues: Small ribosomal subunit protein bS21 (65 aa).

This sequence belongs to the bacterial ribosomal protein bS21 family.

The chain is Small ribosomal subunit protein bS21 from Geobacter sp. (strain M21).